Reading from the N-terminus, the 61-residue chain is UPF0181 protein KPN78578_22920 (61 aa).

It belongs to the UPF0181 family.

The protein is UPF0181 protein KPN78578_22920 of Klebsiella pneumoniae subsp. pneumoniae (strain ATCC 700721 / MGH 78578).